The sequence spans 268 residues: Tryptophan synthase alpha chain (268 aa).

Residues Glu49 and Asp60 each act as proton acceptor in the active site.

Belongs to the TrpA family. In terms of assembly, tetramer of two alpha and two beta chains.

It catalyses the reaction (1S,2R)-1-C-(indol-3-yl)glycerol 3-phosphate + L-serine = D-glyceraldehyde 3-phosphate + L-tryptophan + H2O. It participates in amino-acid biosynthesis; L-tryptophan biosynthesis; L-tryptophan from chorismate: step 5/5. Its function is as follows. The alpha subunit is responsible for the aldol cleavage of indoleglycerol phosphate to indole and glyceraldehyde 3-phosphate. This chain is Tryptophan synthase alpha chain, found in Aeromonas salmonicida (strain A449).